The sequence spans 464 residues: Protein FAM90A8 (464 aa).

Disordered stretches follow at residues 1–42 (MMAR…DPRL), 69–389 (VPAT…HDGA), and 415–437 (HSPE…SEAP). Composition is skewed to basic and acidic residues over residues 74-89 (GKKE…KPRG) and 97-114 (NKDK…DPQR). Low complexity predominate over residues 180–197 (LASLSPLRKASLSSSSSL).

This sequence belongs to the FAM90 family.

This chain is Protein FAM90A8 (FAM90A8), found in Homo sapiens (Human).